Reading from the N-terminus, the 382-residue chain is Lipid-A-disaccharide synthase (382 aa).

Belongs to the LpxB family.

It catalyses the reaction 2-N,3-O-bis[(3R)-3-hydroxytetradecanoyl]-alpha-D-glucosaminyl 1-phosphate + UDP-2-N,3-O-bis[(3R)-3-hydroxytetradecanoyl]-alpha-D-glucosamine = lipid A disaccharide (E. coli) + UDP + H(+). The catalysed reaction is a lipid X + a UDP-2-N,3-O-bis[(3R)-3-hydroxyacyl]-alpha-D-glucosamine = a lipid A disaccharide + UDP + H(+). Its pathway is glycolipid biosynthesis; lipid IV(A) biosynthesis; lipid IV(A) from (3R)-3-hydroxytetradecanoyl-[acyl-carrier-protein] and UDP-N-acetyl-alpha-D-glucosamine: step 5/6. Condensation of UDP-2,3-diacylglucosamine and 2,3-diacylglucosamine-1-phosphate to form lipid A disaccharide, a precursor of lipid A, a phosphorylated glycolipid that anchors the lipopolysaccharide to the outer membrane of the cell. This is Lipid-A-disaccharide synthase from Shigella flexneri.